A 491-amino-acid polypeptide reads, in one-letter code: Cell division control protein 1 (491 aa).

Residues 1-33 (MVYRNRSKSVLSTHSKKSDDKAHYKSRSKKKSK) form a disordered region. The Cytoplasmic segment spans residues 1–39 (MVYRNRSKSVLSTHSKKSDDKAHYKSRSKKKSKSRSKKR). Over residues 24 to 33 (YKSRSKKKSK) the composition is skewed to basic residues. The helical transmembrane segment at 40-60 (LRIYWRYISIVWILWLGLISY) threads the bilayer. Topologically, residues 61–391 (YESVVVKRAM…LCYMPDPYKA (331 aa)) are extracellular. The a divalent metal cation site is built by D95, D144, N183, and H323. The chain crosses the membrane as a helical span at residues 392 to 412 (IRMYLWGLLFSAAFIAYMHFF). Residues 413-465 (PKSFNNRVATIMNRVFTRPDGNTSDLPLPTSISKSKSKKSLTHSKYAVNDTRS) are Cytoplasmic-facing. Residues 466–486 (IKQFLVNAIVLFVSVMPIFIY) traverse the membrane as a helical segment. The Extracellular segment spans residues 487-491 (FYTVV).

The protein belongs to the metallophosphoesterase superfamily. MPPE1 family. It depends on a divalent metal cation as a cofactor.

It localises to the membrane. In terms of biological role, probable metallophosphoesterase which may participate in recombinational repair of double -strand breaks. The polypeptide is Cell division control protein 1 (CDC1) (Saccharomyces cerevisiae (strain ATCC 204508 / S288c) (Baker's yeast)).